A 1174-amino-acid chain; its full sequence is MLEGCILAGSRQIESTTNNSVPGAPNRISFAKLREPLEVPGLLDVQTESFEWLIGAEDWFQRAVDRGDVDPKGGLQEVLEELSPIEDFSGSMSLSFSDPRFDEVKAPVDECKDKDMTYAAPLFVTAEFINNNTGEIKSQTVFMGDFPMMTEKGTFIINGTERVVVSQLVRSPGVYFDESIDKSTEKTLHSVKVIPGRGAWLEFDVDKRDTVGVRIDRKRRQPVTVLLKALGWTNEQIVERFGFSEIMMSTLEKDNTAGTDEALLDIYRKLRPGEPPTKESAQTLLENLFFKEKRYDLARVGRYKVNKKLGLNVGQPITSSTLTEEDVVATIEYLVRLHQGDQTMTAPGGSEVPVEVDDIDHFGNRRLRTVGELIQNQIRVGLSRMERVVRERMTTQDVEAITPQTLINIRPVVAAIKEFFGTSQLSQFMDQNNPLSGLTHKRRLSALGPGGLSRERAGLEVRDVHSSHYGRMCPIETPEGPNIGLIGSLSVYARVNPFGFIETPYRKVVDGVVSDQIDYLTADEEDRHVVAQANSPLDGDGRFEEERVLVRRKGGEVEFVSASEVDYMDVSPRQMVSVATAMIPFLEHDDANRALMGANMQRQAVPLVRSEAPLVGTGMELRAAIDAGDVVVTDKAGVVEEVSADYITVMADDGTRHTYRMRKFARSNHGTCANQRPIVDAGQRVETGQVLADGPCTENGEMALGKNLLVAIMPWEGHNYEDAIILSNRLVEEDVLTSIHIEEHEIDARDTKLGAEEITRDIPNVSDEVLADLDERGIIRIGAEVRDGDILVGKVTPKGETELTPEERLLRAIFGEKAREVRDTSLKVPHGESGKVIGIRVFSREDDDELPAGVNELVRVYVAQKRKISDGDKLAGRHGNKGVIGKILPVEDMPFLPDGTPVDIILNTHGVPRRMNIGQILETHLGWVAKAGWNIRLASDGADGSTEVPAWAAKLPEHMLSAPADSIVATPVFDGAQEGELQGLLGATLPNRDGETMVNSDGKAVLFDGRSGEPFPYPVTVGYMYILKLHHLVDDKIHARSTGPYSMITQQPLGGKAQFGGQRFGEMECWAMQAYGAAYTLQELLTIKSDDTVGRVKVYEAIVKGENIPEPGIPESFKVLLKELQSLCLNVEVLSSDGAAIEMRDGDDEDLERAAANLGINLSRNESASVEDLA.

The protein belongs to the RNA polymerase beta chain family. In terms of assembly, the RNAP catalytic core consists of 2 alpha, 1 beta, 1 beta' and 1 omega subunit. When a sigma factor is associated with the core the holoenzyme is formed, which can initiate transcription.

The enzyme catalyses RNA(n) + a ribonucleoside 5'-triphosphate = RNA(n+1) + diphosphate. In terms of biological role, DNA-dependent RNA polymerase catalyzes the transcription of DNA into RNA using the four ribonucleoside triphosphates as substrates. This is DNA-directed RNA polymerase subunit beta from Mycolicibacterium gilvum (strain PYR-GCK) (Mycobacterium gilvum (strain PYR-GCK)).